The following is a 238-amino-acid chain: Adenylate dimethylallyltransferase (238 aa).

This sequence belongs to the isopentenyl transferase family.

The catalysed reaction is dimethylallyl diphosphate + AMP = N(6)-(dimethylallyl)adenosine 5'-phosphate + diphosphate. In terms of biological role, transfers dimethylallyl groups to AMP as part of the biosynthesis of cytokinin phytohormones. The sequence is that of Adenylate dimethylallyltransferase (tzs) from Ralstonia solanacearum (Pseudomonas solanacearum).